Consider the following 25-residue polypeptide: Repetitive proline-rich cell wall protein (25 aa).

The segment at Asn-1–Pro-25 is disordered. 4 repeat units span residues Pro-5–Lys-9, Pro-10–Lys-14, Pro-15–Lys-19, and Pro-20–Lys-24. A 4 X 5 AA tandem repeats of P-P-V-[EY]-K region spans residues Pro-5 to Lys-24. 4 positions are modified to 4-hydroxyproline: Pro-6, Pro-11, Pro-16, and Pro-21. Over residues Glu-8 to Pro-25 the composition is skewed to pro residues.

Belongs to the plant proline-rich protein superfamily. ENOD12 family.

The protein localises to the secreted. Its subcellular location is the cell wall. This is Repetitive proline-rich cell wall protein from Phaseolus vulgaris (Kidney bean).